The following is a 197-amino-acid chain: uncharacterized protein (197 aa).

The helical transmembrane segment at 150–172 (SLKLNTTLPMFALNLICLLRSIL) threads the bilayer.

The protein localises to the membrane. This is an uncharacterized protein from Saccharomyces cerevisiae (strain ATCC 204508 / S288c) (Baker's yeast).